Reading from the N-terminus, the 965-residue chain is Glycine dehydrogenase (decarboxylating) (965 aa).

Residue K711 is modified to N6-(pyridoxal phosphate)lysine.

It belongs to the GcvP family. As to quaternary structure, the glycine cleavage system is composed of four proteins: P, T, L and H. The cofactor is pyridoxal 5'-phosphate.

The catalysed reaction is N(6)-[(R)-lipoyl]-L-lysyl-[glycine-cleavage complex H protein] + glycine + H(+) = N(6)-[(R)-S(8)-aminomethyldihydrolipoyl]-L-lysyl-[glycine-cleavage complex H protein] + CO2. The glycine cleavage system catalyzes the degradation of glycine. The P protein binds the alpha-amino group of glycine through its pyridoxal phosphate cofactor; CO(2) is released and the remaining methylamine moiety is then transferred to the lipoamide cofactor of the H protein. This is Glycine dehydrogenase (decarboxylating) from Psychrobacter arcticus (strain DSM 17307 / VKM B-2377 / 273-4).